Consider the following 166-residue polypeptide: MKLSTKVTELTNIIAPAVAACDVALWGIEFAPQGNRSLLRIYIEALPEEQAQNKQVTIENCAAVNHQVSGILEVHDPIAGEFILEVSSPGFDRAFFSDEQMHAYVGQTVSLRLIQAIGEGDKKRRKATGTLNSIDGTSLKLTATDGEQFEIALSNIDKANLIYEDA.

This sequence belongs to the RimP family.

The protein localises to the cytoplasm. In terms of biological role, required for maturation of 30S ribosomal subunits. The polypeptide is Ribosome maturation factor RimP (Psychrobacter arcticus (strain DSM 17307 / VKM B-2377 / 273-4)).